Consider the following 172-residue polypeptide: Large ribosomal subunit protein uL10 (172 aa).

It belongs to the universal ribosomal protein uL10 family. As to quaternary structure, part of the ribosomal stalk of the 50S ribosomal subunit. The N-terminus interacts with L11 and the large rRNA to form the base of the stalk. The C-terminus forms an elongated spine to which L12 dimers bind in a sequential fashion forming a multimeric L10(L12)X complex.

Its function is as follows. Forms part of the ribosomal stalk, playing a central role in the interaction of the ribosome with GTP-bound translation factors. In Nitrobacter hamburgensis (strain DSM 10229 / NCIMB 13809 / X14), this protein is Large ribosomal subunit protein uL10.